Reading from the N-terminus, the 76-residue chain is Protein TraJ (76 aa).

Its subcellular location is the cytoplasm. In terms of biological role, this protein is essential for positively regulating the expression of transfer genes that are involved in the conjugal transfer of DNA between bacterial cells. The sequence is that of Protein TraJ (traJ) from Escherichia coli.